The chain runs to 79 residues: ATP synthase subunit c (79 aa).

The next 2 membrane-spanning stretches (helical) occupy residues 11-31 and 53-73; these read IAVAIMIGLAAIGAAIGIGIL and FFVVMGLVDAIPMIAVGLGLY.

It belongs to the ATPase C chain family. F-type ATPases have 2 components, F(1) - the catalytic core - and F(0) - the membrane proton channel. F(1) has five subunits: alpha(3), beta(3), gamma(1), delta(1), epsilon(1). F(0) has three main subunits: a(1), b(2) and c(10-14). The alpha and beta chains form an alternating ring which encloses part of the gamma chain. F(1) is attached to F(0) by a central stalk formed by the gamma and epsilon chains, while a peripheral stalk is formed by the delta and b chains.

Its subcellular location is the cell membrane. Functionally, f(1)F(0) ATP synthase produces ATP from ADP in the presence of a proton or sodium gradient. F-type ATPases consist of two structural domains, F(1) containing the extramembraneous catalytic core and F(0) containing the membrane proton channel, linked together by a central stalk and a peripheral stalk. During catalysis, ATP synthesis in the catalytic domain of F(1) is coupled via a rotary mechanism of the central stalk subunits to proton translocation. In terms of biological role, key component of the F(0) channel; it plays a direct role in translocation across the membrane. A homomeric c-ring of between 10-14 subunits forms the central stalk rotor element with the F(1) delta and epsilon subunits. In Buchnera aphidicola subsp. Schizaphis graminum (strain Sg), this protein is ATP synthase subunit c.